Consider the following 282-residue polypeptide: Pantothenate synthetase (282 aa).

Residue M30 to H37 coordinates ATP. H37 serves as the catalytic Proton donor. Position 61 (Q61) interacts with (R)-pantoate. Q61 provides a ligand contact to beta-alanine. Position 147–150 (G147–D150) interacts with ATP. Residue Q153 participates in (R)-pantoate binding. ATP is bound by residues V176 and M184 to R187.

It belongs to the pantothenate synthetase family. As to quaternary structure, homodimer.

It localises to the cytoplasm. The catalysed reaction is (R)-pantoate + beta-alanine + ATP = (R)-pantothenate + AMP + diphosphate + H(+). The protein operates within cofactor biosynthesis; (R)-pantothenate biosynthesis; (R)-pantothenate from (R)-pantoate and beta-alanine: step 1/1. Catalyzes the condensation of pantoate with beta-alanine in an ATP-dependent reaction via a pantoyl-adenylate intermediate. The protein is Pantothenate synthetase of Geotalea daltonii (strain DSM 22248 / JCM 15807 / FRC-32) (Geobacter daltonii).